Here is a 528-residue protein sequence, read N- to C-terminus: ATP synthase subunit alpha 1 (528 aa).

177-184 is an ATP binding site; that stretch reads GDRQTGKT.

This sequence belongs to the ATPase alpha/beta chains family. In terms of assembly, F-type ATPases have 2 components, CF(1) - the catalytic core - and CF(0) - the membrane proton channel. CF(1) has five subunits: alpha(3), beta(3), gamma(1), delta(1), epsilon(1). CF(0) has three main subunits: a(1), b(2) and c(9-12). The alpha and beta chains form an alternating ring which encloses part of the gamma chain. CF(1) is attached to CF(0) by a central stalk formed by the gamma and epsilon chains, while a peripheral stalk is formed by the delta and b chains.

It localises to the cell inner membrane. The catalysed reaction is ATP + H2O + 4 H(+)(in) = ADP + phosphate + 5 H(+)(out). Produces ATP from ADP in the presence of a proton gradient across the membrane. The alpha chain is a regulatory subunit. This chain is ATP synthase subunit alpha 1, found in Pseudoalteromonas atlantica (strain T6c / ATCC BAA-1087).